Here is a 327-residue protein sequence, read N- to C-terminus: GMP reductase (327 aa).

Cys-176 serves as the catalytic Thioimidate intermediate. NADP(+) is bound at residue 205–228 (IIADGGIRTHGDIAKSIRFGASMV).

This sequence belongs to the IMPDH/GMPR family. GuaC type 2 subfamily.

The catalysed reaction is IMP + NH4(+) + NADP(+) = GMP + NADPH + 2 H(+). Its function is as follows. Catalyzes the irreversible NADPH-dependent deamination of GMP to IMP. It functions in the conversion of nucleobase, nucleoside and nucleotide derivatives of G to A nucleotides, and in maintaining the intracellular balance of A and G nucleotides. In Streptococcus agalactiae serotype Ia (strain ATCC 27591 / A909 / CDC SS700), this protein is GMP reductase.